The primary structure comprises 230 residues: Flagellar L-ring protein (230 aa).

A signal peptide spans 1 to 16 (MYLVFGIIFTSVIVTS). Cysteine 17 is lipidated: N-palmitoyl cysteine. A lipid anchor (S-diacylglycerol cysteine) is attached at cysteine 17.

It belongs to the FlgH family. As to quaternary structure, the basal body constitutes a major portion of the flagellar organelle and consists of four rings (L,P,S, and M) mounted on a central rod.

It localises to the cell outer membrane. It is found in the bacterial flagellum basal body. Its function is as follows. Assembles around the rod to form the L-ring and probably protects the motor/basal body from shearing forces during rotation. The protein is Flagellar L-ring protein of Bartonella bacilliformis (strain ATCC 35685 / KC583 / Herrer 020/F12,63).